We begin with the raw amino-acid sequence, 911 residues long: Valine--tRNA ligase (911 aa).

The 'HIGH' region signature appears at Pro57–His67. Positions Lys599–Ser603 match the 'KMSKS' region motif. Lys602 serves as a coordination point for ATP. A disordered region spans residues Glu882–His911.

It belongs to the class-I aminoacyl-tRNA synthetase family. ValS type 2 subfamily. In terms of assembly, monomer.

Its subcellular location is the cytoplasm. The enzyme catalyses tRNA(Val) + L-valine + ATP = L-valyl-tRNA(Val) + AMP + diphosphate. Functionally, catalyzes the attachment of valine to tRNA(Val). As ValRS can inadvertently accommodate and process structurally similar amino acids such as threonine, to avoid such errors, it has a 'posttransfer' editing activity that hydrolyzes mischarged Thr-tRNA(Val) in a tRNA-dependent manner. This Bifidobacterium longum (strain NCC 2705) protein is Valine--tRNA ligase.